The following is a 305-amino-acid chain: Glutaminase 2 (305 aa).

Ser61, Asn113, Glu158, Asn165, Tyr189, Tyr241, and Val259 together coordinate substrate.

The protein belongs to the glutaminase family. In terms of assembly, homotetramer.

The enzyme catalyses L-glutamine + H2O = L-glutamate + NH4(+). This chain is Glutaminase 2, found in Clostridium perfringens (strain 13 / Type A).